Consider the following 159-residue polypeptide: MRCPFCRHEDTQVVDSRVSEDGAAIRRRRRCSACDKRFTTYERVELNLPAVVKKDGSRTEFDRRKIVASMQLALRKRPVAADAIDAAVARIEYQLLATGEREVRSEKLGELVMNELRGLDTIAYVRFASVYRRFEDVSEFADVIEEFRRASPSKPPRKR.

The segment at 3 to 34 is a zinc-finger region; sequence CPFCRHEDTQVVDSRVSEDGAAIRRRRRCSAC. In terms of domain architecture, ATP-cone spans 49-139; sequence PAVVKKDGSR…VYRRFEDVSE (91 aa).

This sequence belongs to the NrdR family. It depends on Zn(2+) as a cofactor.

Negatively regulates transcription of bacterial ribonucleotide reductase nrd genes and operons by binding to NrdR-boxes. The polypeptide is Transcriptional repressor NrdR (Burkholderia vietnamiensis (strain G4 / LMG 22486) (Burkholderia cepacia (strain R1808))).